A 345-amino-acid polypeptide reads, in one-letter code: D-amino-acid oxidase (345 aa).

FAD contacts are provided by serine 10, isoleucine 13, serine 49, glycine 53, and asparagine 55. Residues tyrosine 230 and arginine 290 each coordinate (R)-lactate. Positions 230 and 290 each coordinate anthranilate. FAD-binding residues include arginine 290, serine 317, glycine 320, tyrosine 321, and glutamine 322. Positions 343–345 (AKL) match the Microbody targeting signal motif.

This sequence belongs to the DAMOX/DASOX family. It depends on FAD as a cofactor.

Its subcellular location is the peroxisome matrix. The enzyme catalyses a D-alpha-amino acid + O2 + H2O = a 2-oxocarboxylate + H2O2 + NH4(+). It carries out the reaction D-methionine + O2 + H2O = 4-methylsulfanyl-2-oxobutanoate + H2O2 + NH4(+). Functionally, catalyzes the oxidative deamination of D-amino acids with broad substrate specificity. Enables the organism to utilize D-amino acids as a source of nutrients. Enables the organism to utilize D-alanine as a nitrogen source, although it is not strictly required for this process. Also enables utilization of D-alanine as a carbon source. This chain is D-amino-acid oxidase, found in Candida boidinii (Yeast).